We begin with the raw amino-acid sequence, 61 residues long: Early E3 6.4 kDa protein (61 aa).

Residues 1 to 25 (MGNAGPLKLHTITKPGTIPYPPHGS) are disordered.

This Homo sapiens (Human) protein is Early E3 6.4 kDa protein.